The chain runs to 362 residues: Ferrochelatase (362 aa).

Residues His212 and Glu294 each coordinate Fe cation.

It belongs to the ferrochelatase family.

The protein resides in the cytoplasm. The enzyme catalyses heme b + 2 H(+) = protoporphyrin IX + Fe(2+). It participates in porphyrin-containing compound metabolism; protoheme biosynthesis; protoheme from protoporphyrin-IX: step 1/1. Its function is as follows. Catalyzes the ferrous insertion into protoporphyrin IX. In Leptospira biflexa, this protein is Ferrochelatase.